Reading from the N-terminus, the 227-residue chain is Isopentenyl-diphosphate Delta-isomerase 1 (227 aa).

Lys-36 is a substrate binding site. The Mg(2+) site is built by His-40 and His-51. Residues Leu-49–Ile-199 form the Nudix hydrolase domain. Residues Arg-70 and Lys-74 each contribute to the substrate site. Cys-86 is a catalytic residue. Ser-87 lines the substrate pocket. Mg(2+)-binding residues include Glu-146 and Glu-148. Residue Glu-148 is part of the active site. Lys-176 carries the post-translational modification N6-acetyllysine. The short motif at His-225–Leu-227 is the Microbody targeting signal element.

The protein belongs to the IPP isomerase type 1 family. As to quaternary structure, monomer. Mg(2+) is required as a cofactor.

The protein resides in the peroxisome. It carries out the reaction isopentenyl diphosphate = dimethylallyl diphosphate. It participates in isoprenoid biosynthesis; dimethylallyl diphosphate biosynthesis; dimethylallyl diphosphate from isopentenyl diphosphate: step 1/1. Catalyzes the 1,3-allylic rearrangement of the homoallylic substrate isopentenyl (IPP) to its highly electrophilic allylic isomer, dimethylallyl diphosphate (DMAPP). This is Isopentenyl-diphosphate Delta-isomerase 1 (Idi1) from Mus musculus (Mouse).